The primary structure comprises 252 residues: 2-succinyl-6-hydroxy-2,4-cyclohexadiene-1-carboxylate synthase (252 aa).

Belongs to the AB hydrolase superfamily. MenH family. In terms of assembly, monomer.

It catalyses the reaction 5-enolpyruvoyl-6-hydroxy-2-succinyl-cyclohex-3-ene-1-carboxylate = (1R,6R)-6-hydroxy-2-succinyl-cyclohexa-2,4-diene-1-carboxylate + pyruvate. The protein operates within quinol/quinone metabolism; 1,4-dihydroxy-2-naphthoate biosynthesis; 1,4-dihydroxy-2-naphthoate from chorismate: step 3/7. It functions in the pathway quinol/quinone metabolism; menaquinone biosynthesis. Its function is as follows. Catalyzes a proton abstraction reaction that results in 2,5-elimination of pyruvate from 2-succinyl-5-enolpyruvyl-6-hydroxy-3-cyclohexene-1-carboxylate (SEPHCHC) and the formation of 2-succinyl-6-hydroxy-2,4-cyclohexadiene-1-carboxylate (SHCHC). In Escherichia coli O17:K52:H18 (strain UMN026 / ExPEC), this protein is 2-succinyl-6-hydroxy-2,4-cyclohexadiene-1-carboxylate synthase.